A 163-amino-acid chain; its full sequence is Phosphopantetheine adenylyltransferase (163 aa).

Residue threonine 9 participates in substrate binding. ATP-binding positions include 9-10 (TF) and histidine 17. Substrate is bound by residues lysine 41, threonine 73, and arginine 87. ATP contacts are provided by residues 88–90 (GLR), glutamate 98, and 123–129 (FSFISSS).

The protein belongs to the bacterial CoaD family. As to quaternary structure, homohexamer. Requires Mg(2+) as cofactor.

The protein localises to the cytoplasm. It carries out the reaction (R)-4'-phosphopantetheine + ATP + H(+) = 3'-dephospho-CoA + diphosphate. It functions in the pathway cofactor biosynthesis; coenzyme A biosynthesis; CoA from (R)-pantothenate: step 4/5. Functionally, reversibly transfers an adenylyl group from ATP to 4'-phosphopantetheine, yielding dephospho-CoA (dPCoA) and pyrophosphate. The protein is Phosphopantetheine adenylyltransferase of Desulfitobacterium hafniense (strain Y51).